The chain runs to 315 residues: tRNA dimethylallyltransferase (315 aa).

Position 14–21 (14–21) interacts with ATP; the sequence is GPTASGKT. 16–21 is a substrate binding site; sequence TASGKT. Interaction with substrate tRNA regions lie at residues 39–42, 163–167, and 248–253; these read DSAL, QRIQR, and RCVGYR.

This sequence belongs to the IPP transferase family. As to quaternary structure, monomer. Mg(2+) is required as a cofactor.

It carries out the reaction adenosine(37) in tRNA + dimethylallyl diphosphate = N(6)-dimethylallyladenosine(37) in tRNA + diphosphate. In terms of biological role, catalyzes the transfer of a dimethylallyl group onto the adenine at position 37 in tRNAs that read codons beginning with uridine, leading to the formation of N6-(dimethylallyl)adenosine (i(6)A). In Paraburkholderia phytofirmans (strain DSM 17436 / LMG 22146 / PsJN) (Burkholderia phytofirmans), this protein is tRNA dimethylallyltransferase.